The chain runs to 712 residues: MAEYTRSISFYGREIDINIGLMAPQAGCGVWLTSGETSILVTATRQPGRPGVDFMPLLVDYEERLYAAGRIPGGYLRREGRPPERATLISRLIDRPIRPLFPEWLRDDVQVVATTLSVDDTVPPDVLCILGASLAIHGARIPFNGPVAAVRVGLVKDEFILNPTYAEIEAGDLDLVVAGCADGVIMVEAGANQLPEKDVVEAIEFGFEAIQELLKAQQQVLADLNITPVELPPPPKNEELIAFVEEQAQEGIRSILRQFLDKTSREQQLEELKAKLEAQIQERPEGDPLRLYLLENPKELDNQFKALLKKLMRQQILQEGVRVDGRKLDEVRPVSCRVGLIPRVHGSALFNRGLTQVLSITTLGTPGDAQELDDLHPVDEKRYMHHYNFPGFSVGETRPSRSPGRREIGHGALAERALVPVLPKEEEFPYVVRVVSEVLSSNGSTSMGSVCGSTLSLMDAGVPIKAPVSGVAMGLIKEGDEVRILTDIQGIEDFLGDMDFKVAGTRAGITALQMDMKITGITVDVVEQAIRQAKAGREFILDKMLETIAAPRPQLAKTAPRLLTFKVDPEDIGKIIGPGGKTVRGITEATGAKVDISDDGTITVSSSVGGQAEAARAMIENLVRRVEEGQVYLGKVTRIIPIGAFVEFLPGKEGMIHISQLAEYRVGRVEDEVAVEDEVVVKVRSIDHKGRINLTRLGISPEEAARVRNHHH.

Residues aspartate 493 and aspartate 499 each coordinate Mg(2+). In terms of domain architecture, KH spans 560 to 619 (PRLLTFKVDPEDIGKIIGPGGKTVRGITEATGAKVDISDDGTITVSSSVGGQAEAARAMI). An S1 motif domain is found at 629–697 (GQVYLGKVTR…HKGRINLTRL (69 aa)).

The protein belongs to the polyribonucleotide nucleotidyltransferase family. The cofactor is Mg(2+).

The protein localises to the cytoplasm. The enzyme catalyses RNA(n+1) + phosphate = RNA(n) + a ribonucleoside 5'-diphosphate. Involved in mRNA degradation. Catalyzes the phosphorolysis of single-stranded polyribonucleotides processively in the 3'- to 5'-direction. The polypeptide is Polyribonucleotide nucleotidyltransferase (Synechococcus sp. (strain JA-2-3B'a(2-13)) (Cyanobacteria bacterium Yellowstone B-Prime)).